A 449-amino-acid chain; its full sequence is Elongation factor 1-alpha 1 (449 aa).

The 226-residue stretch at 5–230 (KVHMNLVVVG…DMLEPPVRPS (226 aa)) folds into the tr-type G domain. The tract at residues 14–21 (GHVDAGKS) is G1. GTP is bound at residue 14-21 (GHVDAGKS). Residues 70 to 74 (GITID) are G2. The segment at 91-94 (DAPG) is G3. GTP-binding positions include 91-95 (DAPGH) and 153-156 (NKMD). The G4 stretch occupies residues 153 to 156 (NKMD). The interval 194-196 (SGW) is G5. Glu362 carries the post-translational modification 5-glutamyl glycerylphosphorylethanolamine.

This sequence belongs to the TRAFAC class translation factor GTPase superfamily. Classic translation factor GTPase family. EF-Tu/EF-1A subfamily. Post-translationally, phosphatidylethanolamine (PE) is a direct precursor of the ethanolamine-phosphoglycerol (EPG) moiety.

It localises to the cytoplasm. This protein promotes the GTP-dependent binding of aminoacyl-tRNA to the A-site of ribosomes during protein biosynthesis. This is Elongation factor 1-alpha 1 (TEF1) from Trypanosoma brucei brucei (strain 927/4 GUTat10.1).